The primary structure comprises 663 residues: Transketolase 2 (663 aa).

Histidine 25 contacts substrate. Thiamine diphosphate is bound by residues histidine 65 and 113 to 115; that span reads GPL. Aspartate 154 is a Mg(2+) binding site. Residues glycine 155 and asparagine 184 each contribute to the thiamine diphosphate site. Residues asparagine 184 and isoleucine 186 each coordinate Mg(2+). Positions 259, 356, and 383 each coordinate substrate. Residue histidine 259 participates in thiamine diphosphate binding. The active-site Proton donor is the glutamate 410. Phenylalanine 436 lines the thiamine diphosphate pocket. 3 residues coordinate substrate: histidine 460, aspartate 468, and arginine 519.

The protein belongs to the transketolase family. As to quaternary structure, homodimer. Mg(2+) is required as a cofactor. Ca(2+) serves as cofactor. Requires Mn(2+) as cofactor. The cofactor is Co(2+). It depends on thiamine diphosphate as a cofactor.

The catalysed reaction is D-sedoheptulose 7-phosphate + D-glyceraldehyde 3-phosphate = aldehydo-D-ribose 5-phosphate + D-xylulose 5-phosphate. Functionally, catalyzes the transfer of a two-carbon ketol group from a ketose donor to an aldose acceptor, via a covalent intermediate with the cofactor thiamine pyrophosphate. The chain is Transketolase 2 (tkt2) from Vibrio vulnificus (strain CMCP6).